A 449-amino-acid polypeptide reads, in one-letter code: uncharacterized protein (449 aa).

Positions 1 to 20 (MWTALVLIWIFSLSLSESHA) are cleaved as a signal peptide. At 21 to 400 (ASNDPRNFVP…PLTQAVVDKT (380 aa)) the chain is on the extracellular side. Residue Asn49 is glycosylated (N-linked (GlcNAc...) asparagine). 3 disordered regions span residues 72–101 (AHLN…AADG), 154–187 (MTAA…GHPS), and 215–381 (QTVA…PSTQ). 2 stretches are compositionally biased toward low complexity: residues 154–184 (MTAA…TATG) and 215–234 (QTVA…PSPS). 2 stretches are compositionally biased toward polar residues: residues 255–279 (GPIS…MPSN) and 352–367 (TPGT…SSGG). The chain crosses the membrane as a helical span at residues 401–421 (LLLVVLLLGVTLFITVLVLFA). Residues 422–449 (LQAYESYKKKDYTQVDYLINGMYADSEM) lie on the Cytoplasmic side of the membrane.

Highest expression in heart, placenta, liver, pancreas and colon. Also detected in brain, lung, skeletal muscle, kidney, spleen, prostate, testis, ovary and small intestine. Lowest expression in thymus and leukocytes.

Its subcellular location is the cell membrane. The protein resides in the golgi apparatus. The protein localises to the trans-Golgi network membrane. This is an uncharacterized protein from Homo sapiens (Human).